A 1946-amino-acid chain; its full sequence is Sickle tail protein (1946 aa).

2 disordered regions span residues Met1–Pro83 and Glu113–Ala176. Positions Asp18–Glu36 are enriched in polar residues. Basic and acidic residues predominate over residues Ala38 to Leu47. A Phosphoserine modification is found at Ser169. A Phosphotyrosine modification is found at Tyr244. 2 disordered regions span residues His305–Pro324 and Ala339–Lys374. A compositionally biased stretch (pro residues) spans His308–Pro324. The span at Ser352–Ile367 shows a compositional bias: low complexity. O-linked (GlcNAc) serine glycosylation is present at Ser357. 2 positions are modified to phosphoserine: Ser361 and Ser365. Tyr393 is subject to Phosphotyrosine. The segment at Ser455–Lys512 is disordered. At Thr470 the chain carries Phosphothreonine. Ser474 carries the phosphoserine modification. Basic and acidic residues predominate over residues Arg477–Pro488. Coiled coils occupy residues Arg557–Leu581 and Thr644–Ile685. Ser809 is modified (phosphoserine). 2 disordered regions span residues Glu853 to Ser875 and Ser891 to Gly947. Composition is skewed to polar residues over residues Ser891–Gln909 and Gln927–Gly947. Positions Ser962–Lys990 form a coiled coil. Residues Pro1008–Glu1221 are disordered. Phosphoserine occurs at positions 1032, 1035, 1038, and 1049. The segment covering Ser1049 to Arg1058 has biased composition (pro residues). Polar residues predominate over residues Asn1151–Asn1162. A compositionally biased stretch (basic and acidic residues) spans Pro1176–Val1194. Ser1466 carries the phosphoserine modification. Positions Phe1469 to Asp1495 form a coiled coil. 3 disordered regions span residues Glu1482 to Gln1567, Ala1622 to Thr1664, and Val1691 to Ser1946. The span at Lys1484–Asp1495 shows a compositional bias: acidic residues. Residues Val1498 to Gln1508 are compositionally biased toward polar residues. Composition is skewed to basic and acidic residues over residues Val1509–Gln1518 and Ala1622–Glu1644. The stretch at Glu1659–Arg1688 forms a coiled coil. Residues Lys1739–Arg1759 are compositionally biased toward polar residues. Ser1741 carries the phosphoserine modification. Residues Lys1765–Gln1777 are compositionally biased toward basic and acidic residues. Residues Ala1806 to Ser1825 are compositionally biased toward low complexity. Phosphoserine is present on Ser1843. The segment covering His1851–Phe1866 has biased composition (polar residues). The segment covering Ala1890 to Ser1899 has biased composition (low complexity). Phosphoserine occurs at positions 1899, 1902, and 1905. Polar residues predominate over residues His1920–Ser1946.

In terms of assembly, interacts with CPNE4 (via VWFA domain). In terms of tissue distribution, expressed predominantly in the notochord and mesonephros during embryogenesis as well as in other areas such as the epithalamus sulcus, lens vesicle, inner retinal layer, heart, hepatic primordial surface, infundibulum, surface ectoderm, hind gut and limb bud mesenchyme. In adults, expressed in a range of tissues including the nucleus pulposus, corpus callosum, kidney, cardiac muscle, Sertoli cells and hair follicles.

It is found in the cytoplasm. The protein resides in the cytoskeleton. Its subcellular location is the microtubule organizing center. The protein localises to the centrosome. Functionally, required for normal development of intervertebral disks. The chain is Sickle tail protein from Mus musculus (Mouse).